Consider the following 264-residue polypeptide: Indole-3-glycerol phosphate synthase (264 aa).

It belongs to the TrpC family.

The enzyme catalyses 1-(2-carboxyphenylamino)-1-deoxy-D-ribulose 5-phosphate + H(+) = (1S,2R)-1-C-(indol-3-yl)glycerol 3-phosphate + CO2 + H2O. It functions in the pathway amino-acid biosynthesis; L-tryptophan biosynthesis; L-tryptophan from chorismate: step 4/5. This Xylella fastidiosa (strain M12) protein is Indole-3-glycerol phosphate synthase.